The chain runs to 73 residues: Alternative prion protein (73 aa).

Residues 32-52 traverse the membrane as a helical segment; sequence WWWLGAASWWWLGAAPWWWLG.

In terms of tissue distribution, detected in brain homogenate, primary neurons, and peripheral blood mononuclear cells (at protein level).

It is found in the mitochondrion outer membrane. This is Alternative prion protein (PRNP) from Homo sapiens (Human).